Consider the following 117-residue polypeptide: Protein OPG035 (117 aa).

It belongs to the poxviridae OPG035 family.

Functionally, bcl-2-like protein which contributes to virulence by preventing host NF-kappa-B activation in response to pro-inflammatory stimuli such as TNF-alpha or IL1B. The chain is Protein OPG035 (OPG035) from Monkeypox virus.